The chain runs to 218 residues: Copper acquisition factor BIM1 (218 aa).

The signal sequence occupies residues 1 to 19 (MFALKSILVTSLITSTALA). Cu(2+)-binding residues include His-20 and His-65. N-linked (GlcNAc...) asparagine glycosylation is found at Asn-87, Asn-91, and Asn-124. Asp-138 contacts Cu(2+). Residues Asn-158 and Asn-170 are each glycosylated (N-linked (GlcNAc...) asparagine). The tract at residues 160–194 (TCTNDASKASNATSTSSGSATATSAAATSSSSGTS) is disordered. A compositionally biased stretch (low complexity) spans 165 to 194 (ASKASNATSTSSGSATATSAAATSSSSGTS). The GPI-anchor amidated serine moiety is linked to residue Ser-190. Residues 191–218 (SGTSGAIKEVVGFGALSLALGIAGLIIL) constitute a propeptide, removed in mature form.

The protein belongs to the X325 family. In terms of assembly, interacts with the CUF1-dependent copper transporter CTR1. Requires Cu(2+) as cofactor.

It localises to the cell membrane. In terms of biological role, lytic polysaccharide monooxygenase-like protein that has diverged to biological functions other than polysaccharide degradation since it does not perform oxidative cleavage of polysaccharides. Cell surface-bound protein that functions in the copper-accumulation pathway shared by the CUF1-dependent copper transporter CTR1. Involved in maintaining cell wall integrity during copper deficiency. Binds Cu(2+) with an estimated 1:1 stoichiometry and might serve as an extracellular copper ligand. FRE4 and FRE7 metalloreductases probably function together with CTR1 and BIM1 to liberate the Cu(2+) bound to the BIM1 copper-binding site for subsequent import of Cu(+) into the cell by CTR1, via the reduction of BIM1-bound Cu(2+) to Cu(+) to reduce binding affinity for BIM1 but increase affinity for CTR1. Facilitates copper acquisition in the brain of mammalian hosts and acts as a copper-dependent virulence trait in fungal meningitis. While BIM1 plays a critical role in cryptococcal meningitis, at least in part through its role in copper acquisition, it could play additional roles during copper limitation or as a means to invade and colonize host tissues in the brain, by compromising host carbohydrate integrity via its lytic polysaccharide monooxygenase (LPMO) activity, which has still to be determined. This chain is Copper acquisition factor BIM1, found in Cryptococcus neoformans var. grubii serotype A (strain H99 / ATCC 208821 / CBS 10515 / FGSC 9487) (Filobasidiella neoformans var. grubii).